The following is a 452-amino-acid chain: MEKQYLTVTALTRYIKTKIEYDPHLQSVWLKGEISNFKNHSRGHMYFTLKDENARIAAVMFAGHNRNIKFKPENGMKVLVKGKISVYEASGSYQIYIQDMQPDGVGNLHLAYEQLKVRLEEEGLFSQVYKKAIPPYAKTIGVITSPTGAAIRDIITTIKRRYPIGNVIVFPVLVQGESAAPSIVQAIRTANEMGEIDVLIVGRGGGSIEELWAFNEEMVARAIFKSEIPIISAVGHETDFTIADFVADLRAPTPTAAAELAAPNIIELQEKVLQRTLRLQRAMRELVHKKEEKLQVLQKSYAFRYPRQVYEQKEEQLDRALEQLVLAKERYIDKKVNQLKQLSFYLEKHHPSQKIMQTKVAVETLQKQLQREMQTLLQTKEFAFVRAAQKLEALSPLKVMMRGYGLVYDEEKQVLKSVKDVSLGDAVSVQLQDGILDCSVSGIEERELNDGK.

It belongs to the XseA family. Heterooligomer composed of large and small subunits.

Its subcellular location is the cytoplasm. The catalysed reaction is Exonucleolytic cleavage in either 5'- to 3'- or 3'- to 5'-direction to yield nucleoside 5'-phosphates.. In terms of biological role, bidirectionally degrades single-stranded DNA into large acid-insoluble oligonucleotides, which are then degraded further into small acid-soluble oligonucleotides. The sequence is that of Exodeoxyribonuclease 7 large subunit from Bacillus cereus (strain B4264).